A 430-amino-acid polypeptide reads, in one-letter code: CC-adding tRNA nucleotidyltransferase (430 aa).

A CTP-binding site is contributed by 33–36 (GCVR). Mg(2+) contacts are provided by aspartate 46 and aspartate 48. Residues 108–109 (RD), asparagine 113, 150–159 (DPLRIVRAYR), and arginine 190 each bind CTP.

This sequence belongs to the tRNA nucleotidyltransferase/poly(A) polymerase family. Requires Mg(2+) as cofactor.

It carries out the reaction a tRNA precursor + 2 CTP = a tRNA with a 3' CC end + 2 diphosphate. Its function is as follows. tRNA nucleotidyltransferase involved in the synthesis of the tRNA CCA terminus. Adds the two cytidine residues to tRNA. This Geobacter sulfurreducens (strain ATCC 51573 / DSM 12127 / PCA) protein is CC-adding tRNA nucleotidyltransferase.